A 158-amino-acid polypeptide reads, in one-letter code: Cyclic pyranopterin monophosphate synthase (158 aa).

Substrate contacts are provided by residues 76-78 (LCH) and 114-115 (ME). Asp129 is a catalytic residue.

The protein belongs to the MoaC family. Homohexamer; trimer of dimers.

The enzyme catalyses (8S)-3',8-cyclo-7,8-dihydroguanosine 5'-triphosphate = cyclic pyranopterin phosphate + diphosphate. The protein operates within cofactor biosynthesis; molybdopterin biosynthesis. Catalyzes the conversion of (8S)-3',8-cyclo-7,8-dihydroguanosine 5'-triphosphate to cyclic pyranopterin monophosphate (cPMP). This Shewanella frigidimarina (strain NCIMB 400) protein is Cyclic pyranopterin monophosphate synthase.